The primary structure comprises 127 residues: MKAQEIISSIEAEEIEKLKQNSKKKIPLLYVGDTVKVGVKIIEGGKERVQPYEGTIIAMRNGGINETITVRRVFQGVGVERVFLLHSPRIANIKLIRRGKVRRAKLYYLRGRVGKATRVKQRFDRSL.

This sequence belongs to the bacterial ribosomal protein bL19 family.

This protein is located at the 30S-50S ribosomal subunit interface and may play a role in the structure and function of the aminoacyl-tRNA binding site. In Trichodesmium erythraeum (strain IMS101), this protein is Large ribosomal subunit protein bL19.